The primary structure comprises 296 residues: Nucleotide-binding protein str0831 (296 aa).

13–20 (GMSGAGKT) serves as a coordination point for ATP. GTP is bound at residue 63–66 (DMRS).

The protein belongs to the RapZ-like family.

Its function is as follows. Displays ATPase and GTPase activities. The polypeptide is Nucleotide-binding protein str0831 (Streptococcus thermophilus (strain CNRZ 1066)).